We begin with the raw amino-acid sequence, 643 residues long: Replication protein E1 (643 aa).

Positions 86 to 88 (KRK) match the Nuclear localization signal motif. A Nuclear export signal motif is present at residues 109–118 (LSPRLQEISL). Residue S110 is modified to Phosphoserine; by host. The span at 152-175 (NTNAENGGSVHSTQSSGGDSSDNA) shows a compositional bias: polar residues. The disordered stretch occupies residues 152-178 (NTNAENGGSVHSTQSSGGDSSDNAENV). The tract at residues 179 to 345 (DPHCSITELK…LTIIQHGIDD (167 aa)) is DNA-binding region. The SF3 helicase domain occupies 444 to 594 (VEFISFLRAL…FPFDKNGNPV (151 aa)). 470–477 (GPANTGKS) is a binding site for ATP. Residue K551 forms a Glycyl lysine isopeptide (Lys-Gly) (interchain with G-Cter in SUMO) linkage.

It belongs to the papillomaviridae E1 protein family. As to quaternary structure, can form hexamers. Interacts with E2 protein; this interaction increases E1 DNA binding specificity. Interacts with host DNA polymerase subunit POLA2. Interacts with host single stranded DNA-binding protein RPA1. Interacts with host TOP1; this interaction stimulates the enzymatic activity of TOP1. Phosphorylated. In terms of processing, sumoylated.

It localises to the host nucleus. The enzyme catalyses Couples ATP hydrolysis with the unwinding of duplex DNA by translocating in the 3'-5' direction.. It carries out the reaction ATP + H2O = ADP + phosphate + H(+). ATP-dependent DNA 3'-5' helicase required for initiation of viral DNA replication. It forms a complex with the viral E2 protein. The E1-E2 complex binds to the replication origin which contains binding sites for both proteins. During the initial step, a dimer of E1 interacts with a dimer of protein E2 leading to a complex that binds the viral origin of replication with high specificity. Then, a second dimer of E1 displaces the E2 dimer in an ATP-dependent manner to form the E1 tetramer. Following this, two E1 monomers are added to each half of the site, which results in the formation of two E1 trimers on the viral ori. Subsequently, two hexamers will be created. The double hexamer acts as a bi-directional helicase machinery and unwinds the viral DNA and then recruits the host DNA polymerase to start replication. The protein is Replication protein E1 of Human papillomavirus 45.